A 243-amino-acid chain; its full sequence is Small ribosomal subunit protein uS3 (243 aa).

Residue A2 is modified to N-acetylalanine. 2 positions are modified to phosphoserine: S6 and S35. The 72-residue stretch at 21–92 (LNEFLTRELA…SVELYAEKVA (72 aa)) folds into the KH type-2 domain. T42 carries the phosphothreonine modification. An N6-acetyllysine modification is found at K62. Asymmetric dimethylarginine is present on residues R64, R65, and R67. T70 carries the post-translational modification Phosphothreonine. K90 is covalently cross-linked (Glycyl lysine isopeptide (Lys-Gly) (interchain with G-Cter in ubiquitin)). A Phosphoserine modification is found at S104. K132 is modified (N6-succinyllysine). The segment at 200–243 (PKKPLPDHVSIVEPKDEILPTTPISEQKGGKPEPPAMPQPVPTA) is disordered. K202 participates in a covalent cross-link: Glycyl lysine isopeptide (Lys-Gly) (interchain with G-Cter in ubiquitin). S209 is subject to Phosphoserine. K214 participates in a covalent cross-link: Glycyl lysine isopeptide (Lys-Gly) (interchain with G-Cter in SUMO2); alternate. K214 is covalently cross-linked (Glycyl lysine isopeptide (Lys-Gly) (interchain with G-Cter in ubiquitin); alternate). Phosphothreonine occurs at positions 220 and 221. S224 is modified (phosphoserine). K230 participates in a covalent cross-link: Glycyl lysine isopeptide (Lys-Gly) (interchain with G-Cter in SUMO2). Positions 231 to 243 (PEPPAMPQPVPTA) are enriched in pro residues. Residue T242 is modified to Phosphothreonine.

The protein belongs to the universal ribosomal protein uS3 family. Component of the 40S small ribosomal subunit. Identified in a IGF2BP1-dependent mRNP granule complex containing untranslated mRNAs. Interacts with HNRPD. Interacts with PRMT1; the interaction methylates RPS3. Interacts with SUMO1; the interaction sumoylates RPS3. Interacts with UBC9. Interacts with CDK1; the interaction phosphorylates RPS3. Interacts with PRKCD; the interaction phosphorylates RPS3. Interacts with PKB/AKT; the interaction phosphorylates RPS3. Interacts with E2F1; the interaction occurs in the absence of nerve growth factor and increases transcription of pro-apoptotic proteins BCL2L11/BIM and HRK/Dp5. Interacts with the base excision repair proteins APEX1 and OGG1; interaction with OGG1 increases OGG1 N-glycosylase activity. Interacts with UNG; the interaction increases the uracil excision activity of UNG1. Interacts with HSP90; the interaction prevents the ubiquitination and proteasome-dependent degradation of RPS3 and is suppressed by increased ROS levels. Interacts with TOM70; the interaction promotes translocation of RPS3 to the mitochondrion. Interacts (via N-terminus) with RELA (via N-terminus); the interaction enhances the DNA-binding activity of the NF-kappa-B p65-p50 complex. Interacts with NFKBIA; the interaction is direct and may bridge the interaction between RPS3 and RELA. Interacts with IKKB; the interaction phosphorylates RPS3 and enhances its translocation to the nucleus. Interacts (via KH domain) with MDM2 and TP53. Interacts with TRADD. Interacts with ASCC3. Identified in a HCV IRES-mediated translation complex, at least composed of EIF3C, IGF2BP1, RPS3 and HCV RNA-replicon. Interacts with CRY1. Post-translationally, methylation by PRMT1 is required for import into the nucleolus and for ribosome assembly. Sumoylation by SUMO1 enhances protein stability through increased resistance to proteolysis. Sumoylation occurs at one or more of the three consensus sites, Lys-18, Lys-214 and Lys-230. In terms of processing, phosphorylation at Thr-221 by CDK1 occurs mainly in G2/M phase. Phosphorylation by PRKCD occurs on a non-ribosomal-associated form which results in translocation of RPS3 to the nucleus and enhances its endonuclease activity. Phosphorylated on Ser-209 by IKKB in response to activation of the NF-kappa-B p65-p50 complex which enhances the association of RPS3 with importin-alpha and mediates the nuclear translocation of RPS3. Phosphorylation by MAPK is required for translocation to the nucleus following exposure of cells to DNA damaging agents such as hydrogen peroxide. Phosphorylation by PKB/AKT mediates RPS3 nuclear translocation, enhances RPS3 endonuclease activity and suppresses RPS3-induced neuronal apoptosis. Post-translationally, ubiquitinated; ubiquitination is prevented by interaction with HSP90 which stabilizes the protein. Monoubiquitinated at Lys-214 by RNF10 and ZNF598 when a ribosome has stalled during translation of poly(A) sequences, leading to preclude synthesis of a long poly-lysine tail and initiate the ribosome quality control (RQC) pathway to degrade the potentially detrimental aberrant nascent polypeptide. Deubiquitinated at Lys-214 by USP10, preventing degradation by the proteasome and promoting 40S ribosome subunit recycling following ribosome dissociation. Ufmylated by UFL1.

The protein localises to the cytoplasm. The protein resides in the nucleus. It is found in the nucleolus. Its subcellular location is the mitochondrion inner membrane. It localises to the cytoskeleton. The protein localises to the spindle. The catalysed reaction is 2'-deoxyribonucleotide-(2'-deoxyribose 5'-phosphate)-2'-deoxyribonucleotide-DNA = a 3'-end 2'-deoxyribonucleotide-(2,3-dehydro-2,3-deoxyribose 5'-phosphate)-DNA + a 5'-end 5'-phospho-2'-deoxyribonucleoside-DNA + H(+). Its activity is regulated as follows. Endonuclease activity is inhibited by MgCl2 on apurinic/apyrimidinic DNA but not on UV-irradiated DNA. In terms of biological role, component of the small ribosomal subunit. The ribosome is a large ribonucleoprotein complex responsible for the synthesis of proteins in the cell. Has endonuclease activity and plays a role in repair of damaged DNA. Cleaves phosphodiester bonds of DNAs containing altered bases with broad specificity and cleaves supercoiled DNA more efficiently than relaxed DNA. Displays high binding affinity for 7,8-dihydro-8-oxoguanine (8-oxoG), a common DNA lesion caused by reactive oxygen species (ROS). Has also been shown to bind with similar affinity to intact and damaged DNA. Stimulates the N-glycosylase activity of the base excision protein OGG1. Enhances the uracil excision activity of UNG1. Also stimulates the cleavage of the phosphodiester backbone by APEX1. When located in the mitochondrion, reduces cellular ROS levels and mitochondrial DNA damage. Has also been shown to negatively regulate DNA repair in cells exposed to hydrogen peroxide. Plays a role in regulating transcription as part of the NF-kappa-B p65-p50 complex where it binds to the RELA/p65 subunit, enhances binding of the complex to DNA and promotes transcription of target genes. Represses its own translation by binding to its cognate mRNA. Binds to and protects TP53/p53 from MDM2-mediated ubiquitination. Involved in spindle formation and chromosome movement during mitosis by regulating microtubule polymerization. Involved in induction of apoptosis through its role in activation of CASP8. Induces neuronal apoptosis by interacting with the E2F1 transcription factor and acting synergistically with it to up-regulate pro-apoptotic proteins BCL2L11/BIM and HRK/Dp5. Interacts with TRADD following exposure to UV radiation and induces apoptosis by caspase-dependent JNK activation. In Oryctolagus cuniculus (Rabbit), this protein is Small ribosomal subunit protein uS3 (RPS3).